We begin with the raw amino-acid sequence, 312 residues long: Methionyl-tRNA formyltransferase (312 aa).

113-116 serves as a coordination point for (6S)-5,6,7,8-tetrahydrofolate; sequence SLLP.

Belongs to the Fmt family.

It catalyses the reaction L-methionyl-tRNA(fMet) + (6R)-10-formyltetrahydrofolate = N-formyl-L-methionyl-tRNA(fMet) + (6S)-5,6,7,8-tetrahydrofolate + H(+). Its function is as follows. Attaches a formyl group to the free amino group of methionyl-tRNA(fMet). The formyl group appears to play a dual role in the initiator identity of N-formylmethionyl-tRNA by promoting its recognition by IF2 and preventing the misappropriation of this tRNA by the elongation apparatus. The chain is Methionyl-tRNA formyltransferase from Francisella philomiragia subsp. philomiragia (strain ATCC 25017 / CCUG 19701 / FSC 153 / O#319-036).